The following is a 393-amino-acid chain: Acyl-homoserine-lactone synthase OpaM (393 aa).

This sequence belongs to the LuxM / VanM family.

It catalyses the reaction a fatty acyl-[ACP] + S-adenosyl-L-methionine = an N-acyl-L-homoserine lactone + S-methyl-5'-thioadenosine + holo-[ACP] + H(+). This chain is Acyl-homoserine-lactone synthase OpaM (opaM), found in Vibrio parahaemolyticus serotype O3:K6 (strain RIMD 2210633).